Consider the following 595-residue polypeptide: Putative terpenoid synthase 16 (595 aa).

Residues Asp-349, Asp-353, Asn-494, and Asp-502 each contribute to the Mg(2+) site. The DDXXD motif signature appears at 349–353; sequence DDTCD.

Belongs to the terpene synthase family. Tpsa subfamily. Mg(2+) is required as a cofactor. It depends on Mn(2+) as a cofactor.

Its subcellular location is the cytoplasm. Its pathway is secondary metabolite biosynthesis; terpenoid biosynthesis. In Arabidopsis thaliana (Mouse-ear cress), this protein is Putative terpenoid synthase 16 (TPS16).